A 753-amino-acid chain; its full sequence is MAP/microtubule affinity-regulating kinase 3 (753 aa).

The segment at 1-36 is disordered; sequence MSTRTPLPTVNERDTENHTSHGDGRQEVTSRTSRSG. The segment covering 11 to 28 has biased composition (basic and acidic residues); it reads NERDTENHTSHGDGRQEV. A Phosphoserine modification is found at Ser42. The Protein kinase domain maps to 56 to 307; sequence YRLLKTIGKG…LEQIMKDRWI (252 aa). ATP contacts are provided by residues 62 to 70 and Lys85; that span reads IGKGNFAKV. The Proton acceptor role is filled by Asp178. Residue Thr211 is modified to Phosphothreonine; by LKB1. One can recognise a UBA domain in the interval 326–365; it reads ISDQKRIDIMVGMGYSQEEIQESLSKMKYDEITATYLLLG. A phosphoserine mark is found at Ser368, Ser374, Ser376, Ser380, Ser383, Leu384, Ser400, Arg407, Ser419, and Ser469. The segment at 370–600 is disordered; it reads ELDASDSSSS…TPLSQTRSRG (231 aa). The span at 374 to 385 shows a compositional bias: low complexity; sequence SDSSSSSNLSLA. Over residues 391–400 the composition is skewed to polar residues; it reads SDLNNSTGQS. Polar residues-rich tracts occupy residues 490–513 and 521–548; these read STVPSSNTASGGMTRRNTYVCSER and VIQNGKENSTIPDQRTPVASTHSISSAA. Residues Ser540 and Ser543 each carry the phosphoserine modification. Thr549 carries the post-translational modification Phosphothreonine. The residue at position 564 (Thr564) is a Phosphothreonine; by PKC/PRKCZ. Ser583, Ser598, Ser601, and Ser643 each carry phosphoserine. A compositionally biased stretch (polar residues) spans 584-600; that stretch reads PSLSHEATPLSQTRSRG. Residues 632 to 655 form a disordered region; the sequence is NGRYEGSSRNVSAEQKDENKEAKP. A compositionally biased stretch (basic and acidic residues) spans 645–655; the sequence is EQKDENKEAKP. Residues 704–753 enclose the KA1 domain; it reads DGHAENLVQWEMEVCKLPRLSLNGVRFKRISGTSIAFKNIASKIANELKL.

Belongs to the protein kinase superfamily. CAMK Ser/Thr protein kinase family. SNF1 subfamily. Interacts with MAPT/TAU. Interacts with DLG5 (via coiled-coil domain). Interacts with STK3/MST2 and STK4/MST1 in the presence of DLG5. Interacts with YWHAB, YWHAG, YWHAQ and YWHAZ. Interacts with PKP2 (via N-terminus). Interacts with CDC25C. Interacts with KSR1. In terms of processing, phosphorylated at Thr-211 by STK11/LKB1 in complex with STE20-related adapter-alpha (STRADA) pseudo kinase and CAB39. Phosphorylation at Thr-564 by PRKCZ/aPKC inhibits the kinase activity. Ubiquitous.

It localises to the cell membrane. The protein resides in the cell projection. The protein localises to the dendrite. It is found in the cytoplasm. It catalyses the reaction L-seryl-[protein] + ATP = O-phospho-L-seryl-[protein] + ADP + H(+). The catalysed reaction is L-threonyl-[protein] + ATP = O-phospho-L-threonyl-[protein] + ADP + H(+). Activated by phosphorylation on Thr-211. Inhibited by phosphorylation on Thr-564. Serine/threonine-protein kinase. Involved in the specific phosphorylation of microtubule-associated proteins for MAP2 and MAP4. Phosphorylates the microtubule-associated protein MAPT/TAU. Phosphorylates CDC25C on 'Ser-216'. Regulates localization and activity of some histone deacetylases by mediating phosphorylation of HDAC7, promoting subsequent interaction between HDAC7 and 14-3-3 and export from the nucleus. Regulates localization and activity of MITF by mediating its phosphorylation, promoting subsequent interaction between MITF and 14-3-3 and retention in the cytosol. Negatively regulates the Hippo signaling pathway and antagonizes the phosphorylation of LATS1. Cooperates with DLG5 to inhibit the kinase activity of STK3/MST2 toward LATS1. Phosphorylates PKP2 and KSR1. This is MAP/microtubule affinity-regulating kinase 3 (MARK3) from Homo sapiens (Human).